The primary structure comprises 470 residues: Na(+)/H(+) antiporter NhaA 2 (470 aa).

The next 11 membrane-spanning stretches (helical) occupy residues 34 to 54, 85 to 105, 121 to 141, 150 to 170, 179 to 199, 202 to 222, 241 to 261, 317 to 337, 357 to 377, 395 to 415, and 423 to 443; these read FLHIEAASGILLLVAAAIALL, LEWVVNDGLMAIFFFVVGMEI, ALPAAAALGGMLVPAGLYLLL, GWGVPMATDIAFAVGILTLLG, VLLLALAVIDDLGAIIVIAVF, SGVAITGLLVAALGIVGVFAM, WAGVYSAGIHPTIAGVIIGLI, SLIATLHPWVAFGIMPVFALA, LATATGLLVGKPLGVIGACWL, LLVLGSTAGIGFTMALFIAQL, and LAAGKLGVLAASGAAAVVALV.

Belongs to the NhaA Na(+)/H(+) (TC 2.A.33) antiporter family.

The protein resides in the cell inner membrane. The catalysed reaction is Na(+)(in) + 2 H(+)(out) = Na(+)(out) + 2 H(+)(in). In terms of biological role, na(+)/H(+) antiporter that extrudes sodium in exchange for external protons. The protein is Na(+)/H(+) antiporter NhaA 2 of Myxococcus xanthus (strain DK1622).